The primary structure comprises 276 residues: 4-hydroxy-3-methylbut-2-enyl diphosphate reductase (276 aa).

Cys-12 is a binding site for [4Fe-4S] cluster. Positions 36 and 70 each coordinate (2E)-4-hydroxy-3-methylbut-2-enyl diphosphate. Dimethylallyl diphosphate is bound by residues His-36 and His-70. The isopentenyl diphosphate site is built by His-36 and His-70. Residue Cys-92 participates in [4Fe-4S] cluster binding. A (2E)-4-hydroxy-3-methylbut-2-enyl diphosphate-binding site is contributed by His-120. His-120 is a binding site for dimethylallyl diphosphate. Position 120 (His-120) interacts with isopentenyl diphosphate. Glu-122 (proton donor) is an active-site residue. Thr-158 contacts (2E)-4-hydroxy-3-methylbut-2-enyl diphosphate. Cys-186 contributes to the [4Fe-4S] cluster binding site. Positions 214, 215, 216, and 258 each coordinate (2E)-4-hydroxy-3-methylbut-2-enyl diphosphate. Residues Ser-214, Ser-215, Asn-216, and Ser-258 each contribute to the dimethylallyl diphosphate site. Ser-214, Ser-215, Asn-216, and Ser-258 together coordinate isopentenyl diphosphate.

This sequence belongs to the IspH family. [4Fe-4S] cluster serves as cofactor.

The enzyme catalyses isopentenyl diphosphate + 2 oxidized [2Fe-2S]-[ferredoxin] + H2O = (2E)-4-hydroxy-3-methylbut-2-enyl diphosphate + 2 reduced [2Fe-2S]-[ferredoxin] + 2 H(+). It catalyses the reaction dimethylallyl diphosphate + 2 oxidized [2Fe-2S]-[ferredoxin] + H2O = (2E)-4-hydroxy-3-methylbut-2-enyl diphosphate + 2 reduced [2Fe-2S]-[ferredoxin] + 2 H(+). Its pathway is isoprenoid biosynthesis; dimethylallyl diphosphate biosynthesis; dimethylallyl diphosphate from (2E)-4-hydroxy-3-methylbutenyl diphosphate: step 1/1. It functions in the pathway isoprenoid biosynthesis; isopentenyl diphosphate biosynthesis via DXP pathway; isopentenyl diphosphate from 1-deoxy-D-xylulose 5-phosphate: step 6/6. In terms of biological role, catalyzes the conversion of 1-hydroxy-2-methyl-2-(E)-butenyl 4-diphosphate (HMBPP) into a mixture of isopentenyl diphosphate (IPP) and dimethylallyl diphosphate (DMAPP). Acts in the terminal step of the DOXP/MEP pathway for isoprenoid precursor biosynthesis. The sequence is that of 4-hydroxy-3-methylbut-2-enyl diphosphate reductase from Wolinella succinogenes (strain ATCC 29543 / DSM 1740 / CCUG 13145 / JCM 31913 / LMG 7466 / NCTC 11488 / FDC 602W) (Vibrio succinogenes).